Here is a 413-residue protein sequence, read N- to C-terminus: Chemotactic signal transduction system substrate-binding protein BasB (413 aa).

The N-terminal stretch at 1–31 (MHSTTRREWLGAIGATAATGLAGCAGVGGAG) is a signal peptide.

It localises to the cell membrane. Functionally, mediates chemotaxis towards five attractant amino acids (leucine, isoleucine, valine, methionine and cysteine). May function as a receptor that binds the amino acids and transduces a signal to BasT. Has probably no additional role in transport. This Halobacterium salinarum (strain ATCC 29341 / DSM 671 / R1) protein is Chemotactic signal transduction system substrate-binding protein BasB (basB).